The primary structure comprises 83 residues: Small ribosomal subunit protein bS20 (83 aa).

This sequence belongs to the bacterial ribosomal protein bS20 family.

Its function is as follows. Binds directly to 16S ribosomal RNA. The sequence is that of Small ribosomal subunit protein bS20 from Staphylococcus haemolyticus (strain JCSC1435).